The chain runs to 470 residues: 3-isopropylmalate dehydratase large subunit (470 aa).

[4Fe-4S] cluster is bound by residues C349, C409, and C412.

It belongs to the aconitase/IPM isomerase family. LeuC type 1 subfamily. Heterodimer of LeuC and LeuD. [4Fe-4S] cluster is required as a cofactor.

The catalysed reaction is (2R,3S)-3-isopropylmalate = (2S)-2-isopropylmalate. Its pathway is amino-acid biosynthesis; L-leucine biosynthesis; L-leucine from 3-methyl-2-oxobutanoate: step 2/4. Catalyzes the isomerization between 2-isopropylmalate and 3-isopropylmalate, via the formation of 2-isopropylmaleate. The sequence is that of 3-isopropylmalate dehydratase large subunit from Campylobacter jejuni subsp. jejuni serotype O:2 (strain ATCC 700819 / NCTC 11168).